Consider the following 340-residue polypeptide: Serpentine receptor class alpha-23 (340 aa).

Transmembrane regions (helical) follow at residues 34–54 (FISTIVLISYCFSWLAIQALW), 114–136 (YFYYLTNYFSTYSVFSLTFDRLI), 150–170 (FIAISLLVLQFLLAILSFYIA), 199–219 (VRTVVMVSCIIVTGFAYYLSV), 250–270 (ILIVLQFSCTMISSFGVNLLL), and 284–304 (VGAFLPGVAYANLCLPLAIYF).

This sequence belongs to the nematode receptor-like protein sra family.

The protein localises to the membrane. The protein is Serpentine receptor class alpha-23 (sra-23) of Caenorhabditis elegans.